Reading from the N-terminus, the 208-residue chain is Small ribosomal subunit protein uS4 (208 aa).

Positions 98–163 (SRLDNVVYRA…LTPFVIARAV (66 aa)) constitute an S4 RNA-binding domain.

The protein belongs to the universal ribosomal protein uS4 family. As to quaternary structure, part of the 30S ribosomal subunit. Contacts protein S5. The interaction surface between S4 and S5 is involved in control of translational fidelity.

One of the primary rRNA binding proteins, it binds directly to 16S rRNA where it nucleates assembly of the body of the 30S subunit. In terms of biological role, with S5 and S12 plays an important role in translational accuracy. This chain is Small ribosomal subunit protein uS4, found in Acidothermus cellulolyticus (strain ATCC 43068 / DSM 8971 / 11B).